The chain runs to 211 residues: Urease accessory protein UreG (211 aa).

11-18 lines the GTP pocket; it reads GPVGSGKT.

Belongs to the SIMIBI class G3E GTPase family. UreG subfamily. In terms of assembly, homodimer. UreD, UreF and UreG form a complex that acts as a GTP-hydrolysis-dependent molecular chaperone, activating the urease apoprotein by helping to assemble the nickel containing metallocenter of UreC. The UreE protein probably delivers the nickel.

Its subcellular location is the cytoplasm. In terms of biological role, facilitates the functional incorporation of the urease nickel metallocenter. This process requires GTP hydrolysis, probably effectuated by UreG. The chain is Urease accessory protein UreG from Laribacter hongkongensis (strain HLHK9).